The primary structure comprises 183 residues: CKLF-like MARVEL transmembrane domain-containing protein 6 (183 aa).

Methionine 1 carries the N-acetylmethionine modification. The Cytoplasmic segment spans residues 1–39; the sequence is MENGAVYSPTTEEDPGPARGPRSGLAAYFFMGRLPLLRR. Serine 8 carries the phosphoserine modification. One can recognise an MARVEL domain in the interval 33–160; sequence RLPLLRRVLK…DFITMLYEKR (128 aa). Residues 40 to 60 traverse the membrane as a helical segment; sequence VLKGLQLLLSLLAFICEEVVS. The Extracellular portion of the chain corresponds to 61–67; it reads QCTLCGG. The chain crosses the membrane as a helical span at residues 68-88; sequence LYFFEFVSCSAFLLSLLILIV. The Cytoplasmic segment spans residues 89-106; that stretch reads YCTPFYERVDTTKVKSSD. Residues 107 to 127 form a helical membrane-spanning segment; that stretch reads FYITLGTGCVFLLASIIFVST. The Extracellular segment spans residues 128-134; sequence HDRTSAE. Residues 135–155 traverse the membrane as a helical segment; sequence IAAIVFGFIASFMFLLDFITM. The Cytoplasmic segment spans residues 156-183; that stretch reads LYEKRQESQLRKPENTTRAEALTEPLNA. Threonine 171 is subject to Phosphothreonine.

This sequence belongs to the chemokine-like factor family. As to quaternary structure, interacts with PD-L1/CD274 (via transmembrane domain); the interaction is direct. Interacts with CMTM4. Interacts with CD58, ARG1, ENO1 and TMPO. In terms of tissue distribution, expressed in the leukocytes, placenta and testis.

The protein localises to the cell membrane. It localises to the early endosome membrane. The protein resides in the recycling endosome membrane. Its function is as follows. Master regulator of recycling and plasma membrane expression of PD-L1/CD274, an immune inhibitory ligand critical for immune tolerance to self and antitumor immunity. Associates with both constitutive and IFNG-induced PD-L1/CD274 at recycling endosomes, where it protects PD-L1/CD274 from being targeted for lysosomal degradation, likely by preventing its STUB1-mediated ubiquitination. May stabilize PD-L1/CD274 expression on antigen presenting cells and potentiates inhibitory signaling by PDCD1/CD279, its receptor on T-cells, ultimately triggering T-cell anergy. This Homo sapiens (Human) protein is CKLF-like MARVEL transmembrane domain-containing protein 6.